We begin with the raw amino-acid sequence, 716 residues long: Protein C-mannosyl-transferase DPY19L3 (716 aa).

The Cytoplasmic portion of the chain corresponds to 1 to 43; it reads MMSIRQRREIRATEVSEDFPAQEENVKLENKLPSGCTSRRLWK. The helical transmembrane segment at 44–64 threads the bilayer; it reads ILSLTIGGTIALCIGLLTSVY. Residues 65 to 154 are Lumenal-facing; the sequence is LATLHENDLW…RVLPVQKYLE (90 aa). Asn118 is a glycosylation site (N-linked (GlcNAc...) asparagine). A helical membrane pass occupies residues 155–182; sequence PVYFYIYTLFGLQAIYVTALYITSWLLS. Topologically, residues 183 to 184 are cytoplasmic; the sequence is GT. Residues 185–197 constitute an intramembrane region (name=3); sequence WLSGLLAAFWYVT. Over 198-215 the chain is Cytoplasmic; sequence NRIDTTRVEFTIPLRENW. Positions 216–230 form an intramembrane region, name=4; the sequence is ALPFFAIQIAAITYF. At 231–239 the chain is on the cytoplasmic side; the sequence is LRPNLQPLS. A helical membrane pass occupies residues 240-256; sequence ERLTLLAIFISTFLFSL. Over 257–262 the chain is Lumenal; sequence TWQFNQ. A helical transmembrane segment spans residues 263 to 279; it reads FMMLMQALVLFTLDSLD. The Cytoplasmic segment spans residues 280 to 289; that stretch reads MLPAVKATWL. A helical membrane pass occupies residues 290 to 306; it reads YGIQITSLLLVCILQFF. The Lumenal portion of the chain corresponds to 307–308; that stretch reads NS. A helical transmembrane segment spans residues 309-323; that stretch reads MILGSLLISFNLSVF. Topologically, residues 324–338 are cytoplasmic; that stretch reads IARKLQKNLKTGSFL. The chain crosses the membrane as a helical span at residues 339-359; it reads NRLGKLLLHLFMVLCLTLFLN. Over 360–414 the chain is Lumenal; that stretch reads NIIKKILNLKSDEHIFKFLKAKFGLGATRDFDANLYLCEEAFGLLPFNTFGRLSD. The helical transmembrane segment at 415 to 437 threads the bilayer; that stretch reads TLLFYAYIFVLSITVIVAFVVAF. Topologically, residues 438 to 465 are cytoplasmic; the sequence is HNLSDSTNQQSVGKMEKGTVDLKPETAY. The chain crosses the membrane as a helical span at residues 466–485; that stretch reads NLIHTILFGFLALSTMRMKY. Topologically, residues 486 to 487 are lumenal; the sequence is LW. A helical membrane pass occupies residues 488–499; the sequence is TSHMCVFASFGL. The Cytoplasmic segment spans residues 500-522; sequence CSPEIWELLLKSVHLYNPKRICI. Residues 523-539 traverse the membrane as a helical segment; that stretch reads MRYSVPILILLYLCYKF. At 540-716 the chain is on the lumenal side; the sequence is WPGMMDELSE…FHVYKLSRNK (177 aa). A glycan (N-linked (GlcNAc...) asparagine) is linked at Asn704.

Belongs to the dpy-19 family.

The protein localises to the endoplasmic reticulum membrane. The catalysed reaction is L-tryptophyl-[protein] + a di-trans,poly-cis-dolichyl beta-D-mannosyl phosphate = C-alpha-D-mannosyl-L-tryptophyl-[protein] + a di-trans,poly-cis-dolichyl phosphate + H(+). The protein operates within protein modification; protein glycosylation. Its function is as follows. C-mannosyltransferase that mediates C-mannosylation of tryptophan residues on target proteins. The reaction occurs on the luminal side of the endoplasmic reticulum and involves the transfer of a mannose unit from a dolichylphosphate mannose (Dol-P-Man) donor to an acceptor protein containing a WxxW or WxxC consensus sequence. C-mannosylates RSPO1, a Wnt signaling regulator, preferentially at the first Trp residue in the sequence WxxW. C-mannosylates the netrin receptor UNC5A, preferentially at the third tryptophan of WxxWxxWxxC sequence. The chain is Protein C-mannosyl-transferase DPY19L3 (DPY19L3) from Pongo abelii (Sumatran orangutan).